Consider the following 77-residue polypeptide: Large ribosomal subunit protein bL28 (77 aa).

The protein belongs to the bacterial ribosomal protein bL28 family.

The protein is Large ribosomal subunit protein bL28 of Ralstonia nicotianae (strain ATCC BAA-1114 / GMI1000) (Ralstonia solanacearum).